We begin with the raw amino-acid sequence, 447 residues long: Tubulin beta chain (447 aa).

GTP-binding residues include Gln11, Glu69, Ser138, Gly142, Thr143, Gly144, Asn204, and Asn226. Glu69 is a binding site for Mg(2+). A disordered region spans residues 427–447 (EAHMDDEEAEEAYEDEAPPEE). Over residues 430-447 (MDDEEAEEAYEDEAPPEE) the composition is skewed to acidic residues.

Belongs to the tubulin family. Dimer of alpha and beta chains. A typical microtubule is a hollow water-filled tube with an outer diameter of 25 nm and an inner diameter of 15 nM. Alpha-beta heterodimers associate head-to-tail to form protofilaments running lengthwise along the microtubule wall with the beta-tubulin subunit facing the microtubule plus end conferring a structural polarity. Microtubules usually have 13 protofilaments but different protofilament numbers can be found in some organisms and specialized cells. Mg(2+) serves as cofactor.

It localises to the cytoplasm. It is found in the cytoskeleton. Functionally, tubulin is the major constituent of microtubules, a cylinder consisting of laterally associated linear protofilaments composed of alpha- and beta-tubulin heterodimers. Microtubules grow by the addition of GTP-tubulin dimers to the microtubule end, where a stabilizing cap forms. Below the cap, tubulin dimers are in GDP-bound state, owing to GTPase activity of alpha-tubulin. In Uromyces fabae (Rust fungus), this protein is Tubulin beta chain (TBB1).